A 465-amino-acid polypeptide reads, in one-letter code: Botryococcus squalene synthase (465 aa).

Residues arginine 48 and arginine 73 each coordinate NADP(+). Mg(2+) contacts are provided by aspartate 76, glutamate 79, and aspartate 80. NADP(+)-binding residues include arginine 215, lysine 315, and arginine 317. The next 2 membrane-spanning stretches (helical) occupy residues alanine 395–glycine 415 and isoleucine 429–leucine 449.

This sequence belongs to the phytoene/squalene synthase family.

The protein localises to the membrane. It catalyses the reaction presqualene diphosphate + NADPH + H(+) = squalene + diphosphate + NADP(+). Its function is as follows. Produces squalene when coexpressed with SSL-1 and bisfarnesyl ether and a very small amount of squalene when incubated alone in the presence of NADPH. The polypeptide is Botryococcus squalene synthase (SSL-2) (Botryococcus braunii (Green alga)).